We begin with the raw amino-acid sequence, 283 residues long: Elongation factor Ts (283 aa).

The interval 79 to 82 (TDFV) is involved in Mg(2+) ion dislocation from EF-Tu.

This sequence belongs to the EF-Ts family.

The protein resides in the cytoplasm. In terms of biological role, associates with the EF-Tu.GDP complex and induces the exchange of GDP to GTP. It remains bound to the aminoacyl-tRNA.EF-Tu.GTP complex up to the GTP hydrolysis stage on the ribosome. This is Elongation factor Ts from Shewanella sp. (strain ANA-3).